The sequence spans 398 residues: uncharacterized protein (398 aa).

A disordered region spans residues 313–398 (KTIKSSGSKT…TSKSIKYYEV (86 aa)). 2 stretches are compositionally biased toward low complexity: residues 314–333 (TIKS…TNKS) and 343–398 (GSKT…YYEV).

This is an uncharacterized protein from Acanthamoeba polyphaga mimivirus (APMV).